Reading from the N-terminus, the 140-residue chain is uncharacterized protein (140 aa).

Residues M1–A19 are compositionally biased toward polar residues. Positions M1 to D140 are disordered. G2 is lipidated: N-myristoyl glycine. The S-palmitoyl cysteine moiety is linked to residue C4. A compositionally biased stretch (basic and acidic residues) spans I27–H40. Positions K41–Q51 are enriched in basic residues. Over residues D73–D140 the composition is skewed to basic and acidic residues.

This sequence to S.pombe new13. Post-translationally, myristoylated. In terms of processing, the N-myristoylated protein is further palmitoylated by ERF2, PFA4 and slightly by PFA5, but not by PFA3.

It is found in the cytoplasm. It localises to the cytosol. This is an uncharacterized protein from Saccharomyces cerevisiae (strain ATCC 204508 / S288c) (Baker's yeast).